Reading from the N-terminus, the 278-residue chain is Nucleotide-binding protein LHK_02029 (278 aa).

An ATP-binding site is contributed by 8-15; that stretch reads GLAGSGKS. 57-60 is a GTP binding site; that stretch reads DTRD.

Belongs to the RapZ-like family.

Displays ATPase and GTPase activities. This Laribacter hongkongensis (strain HLHK9) protein is Nucleotide-binding protein LHK_02029.